The primary structure comprises 156 residues: Putative pre-16S rRNA nuclease (156 aa).

The protein belongs to the YqgF nuclease family.

It localises to the cytoplasm. Functionally, could be a nuclease involved in processing of the 5'-end of pre-16S rRNA. The sequence is that of Putative pre-16S rRNA nuclease from Caulobacter vibrioides (strain ATCC 19089 / CIP 103742 / CB 15) (Caulobacter crescentus).